Reading from the N-terminus, the 418-residue chain is Serine protease inhibitor A3M (418 aa).

A signal peptide spans 1-20 (MAFIAALGILMAGICPTVLC). N-linked (GlcNAc...) asparagine glycans are attached at residues asparagine 104, asparagine 184, and asparagine 269. Residues 367–392 (GTEAAAATGFIFGFRSRRLQTMTVQF) are RCL.

Belongs to the serpin family. In terms of tissue distribution, expressed in liver and testis.

It is found in the secreted. This chain is Serine protease inhibitor A3M (Serpina3m), found in Mus musculus (Mouse).